Consider the following 309-residue polypeptide: Porphobilinogen deaminase (309 aa).

The residue at position 241 (cysteine 241) is an S-(dipyrrolylmethanemethyl)cysteine.

Belongs to the HMBS family. Monomer. Requires dipyrromethane as cofactor.

It catalyses the reaction 4 porphobilinogen + H2O = hydroxymethylbilane + 4 NH4(+). The protein operates within porphyrin-containing compound metabolism; protoporphyrin-IX biosynthesis; coproporphyrinogen-III from 5-aminolevulinate: step 2/4. In terms of biological role, tetrapolymerization of the monopyrrole PBG into the hydroxymethylbilane pre-uroporphyrinogen in several discrete steps. The polypeptide is Porphobilinogen deaminase (Desulforudis audaxviator (strain MP104C)).